The chain runs to 134 residues: Holo-[acyl-carrier-protein] synthase (134 aa).

2 residues coordinate Mg(2+): Asp-8 and Glu-57.

Belongs to the P-Pant transferase superfamily. AcpS family. The cofactor is Mg(2+).

The protein localises to the cytoplasm. The catalysed reaction is apo-[ACP] + CoA = holo-[ACP] + adenosine 3',5'-bisphosphate + H(+). Transfers the 4'-phosphopantetheine moiety from coenzyme A to a Ser of acyl-carrier-protein. The sequence is that of Holo-[acyl-carrier-protein] synthase from Rhizobium leguminosarum bv. trifolii (strain WSM2304).